The primary structure comprises 155 residues: MPDSTIPLLCVLGLLALSSACYIQNCPRGGKRSFPDLKRPCMSCGPGNRGLCFGPSICCGEGMGCYMGSPEAASCVEENYLTSPCEVGGRVCGSEEGHCAAPGVCCDAESCLLDSDCLDDSKRQPPSEQYSSLMEGLAGDLLQWMLHATRRERPQ.

Positions 1 to 20 (MPDSTIPLLCVLGLLALSSA) are cleaved as a signal peptide. Cysteines 21 and 26 form a disulfide. Gly29 is modified (glycine amide). 7 disulfides stabilise this stretch: Cys41/Cys85, Cys44/Cys58, Cys52/Cys75, Cys59/Cys65, Cys92/Cys105, Cys99/Cys117, and Cys106/Cys111.

Belongs to the vasopressin/oxytocin family. In terms of processing, seven disulfide bonds are present in neurophysin.

Its subcellular location is the secreted. In terms of biological role, vasotocin is probably an antidiuretic hormone. The sequence is that of Vasotocin-neurophysin VT 1 from Oncorhynchus masou (Cherry salmon).